We begin with the raw amino-acid sequence, 562 residues long: Arf-GAP domain and FG repeat-containing protein 1 (562 aa).

One can recognise an Arf-GAP domain in the interval 11 to 135 (EKHLKMLRDM…WYVPPEQAKV (125 aa)). The segment at 29–52 (CFDCDQRGPTYVNMTVGSFVCTSC) adopts a C4-type zinc-finger fold. Residue Ser-167 is modified to Phosphoserine. The interval 168–194 (APALHLNKGTPSQSPVVGRSQAQQQEK) is disordered. Over residues 176 to 191 (GTPSQSPVVGRSQAQQ) the composition is skewed to polar residues. Thr-177 bears the Phosphothreonine mark. Phosphoserine is present on residues Ser-181 and Ser-362. Residue Ser-367 is glycosylated (O-linked (GlcNAc) serine).

Interacts with EPS15R and EPS15. Interacts with FCHO1. O-glycosylated.

It is found in the nucleus. The protein resides in the cytoplasmic vesicle. Required for vesicle docking or fusion during acrosome biogenesis. May play a role in RNA trafficking or localization. This Bos taurus (Bovine) protein is Arf-GAP domain and FG repeat-containing protein 1 (AGFG1).